We begin with the raw amino-acid sequence, 55 residues long: Transcriptional regulator CdrS (55 aa).

Belongs to the CdrS family.

The protein resides in the cytoplasm. In terms of biological role, transcriptional regulator which plays a central role in the regulation of cell division. Activates the expression of the gene encoding the cell division protein FtsZ2, and of other genes encoding proteins predicted to function in critical aspects of cell division. Required for normal cell division but not for cell elongation. May act during the transition from stasis to growth. The CdrSL-FtsZ2 transcriptional network might coordinate cell division timing with cell growth. The sequence is that of Transcriptional regulator CdrS from Halobacterium salinarum (strain ATCC 700922 / JCM 11081 / NRC-1) (Halobacterium halobium).